Here is a 183-residue protein sequence, read N- to C-terminus: Type II secretion system protein H (183 aa).

Positions 1 to 8 are cleaved as a propeptide — leader sequence; that stretch reads MRRHRQSG. F9 carries the post-translational modification N-methylphenylalanine. The helical transmembrane segment at 9–28 threads the bilayer; that stretch reads FTLLEVLLVAMLMGLVATAV.

It belongs to the GSP H family. In terms of assembly, type II secretion is composed of four main components: the outer membrane complex, the inner membrane complex, the cytoplasmic secretion ATPase and the periplasm-spanning pseudopilus. Interacts with core component ExeG. Post-translationally, cleaved by prepilin peptidase. In terms of processing, methylated by prepilin peptidase at the amino group of the N-terminal phenylalanine once the leader sequence is cleaved by prepilin peptidase.

The protein localises to the cell inner membrane. Functionally, component of the type II secretion system required for the energy-dependent secretion of extracellular factors such as proteases and toxins from the periplasm. Part of the pseudopilus tip complex that is critical for the recognition and binding of secretion substrates. The sequence is that of Type II secretion system protein H (exeH) from Aeromonas hydrophila.